Here is a 405-residue protein sequence, read N- to C-terminus: Glutathione S-transferase LANCL1 (405 aa).

C282 lines the Zn(2+) pocket. Position 323 (K323) interacts with glutathione. 2 residues coordinate Zn(2+): C328 and H329. Position 370–373 (370–373 (RTPD)) interacts with glutathione.

It belongs to the LanC-like protein family.

Its subcellular location is the cytoplasm. The protein localises to the cell membrane. It carries out the reaction RX + glutathione = an S-substituted glutathione + a halide anion + H(+). The enzyme catalyses 1-chloro-2,4-dinitrobenzene + glutathione = 2,4-dinitrophenyl-S-glutathione + chloride + H(+). Functionally, functions as a glutathione transferase. Catalyzes conjugation of the glutathione (GSH) to artificial substrates 1-chloro-2,4-dinitrobenzene (CDNB) and p-nitrophenyl acetate. Binds glutathione. The chain is Glutathione S-transferase LANCL1 from Danio rerio (Zebrafish).